Consider the following 446-residue polypeptide: Exodeoxyribonuclease 7 large subunit (446 aa).

The protein belongs to the XseA family. In terms of assembly, heterooligomer composed of large and small subunits.

It localises to the cytoplasm. It catalyses the reaction Exonucleolytic cleavage in either 5'- to 3'- or 3'- to 5'-direction to yield nucleoside 5'-phosphates.. In terms of biological role, bidirectionally degrades single-stranded DNA into large acid-insoluble oligonucleotides, which are then degraded further into small acid-soluble oligonucleotides. The sequence is that of Exodeoxyribonuclease 7 large subunit from Streptococcus pneumoniae serotype 4 (strain ATCC BAA-334 / TIGR4).